A 233-amino-acid polypeptide reads, in one-letter code: EEF1A lysine methyltransferase 2 (233 aa).

The protein belongs to the class I-like SAM-binding methyltransferase superfamily. EFM4 family.

It is found in the cytoplasm. It localises to the nucleus. It catalyses the reaction L-lysyl-[protein] + 3 S-adenosyl-L-methionine = N(6),N(6),N(6)-trimethyl-L-lysyl-[protein] + 3 S-adenosyl-L-homocysteine + 3 H(+). Its function is as follows. Protein-lysine methyltransferase that selectively catalyzes the trimethylation of EEF1A at 'Lys-318'. The sequence is that of EEF1A lysine methyltransferase 2 from Danio rerio (Zebrafish).